The chain runs to 198 residues: Probable GTP-binding protein EngB (198 aa).

The EngB-type G domain occupies 21–195 (NFSEVAFLGR…EDIIIDQTLG (175 aa)). Residues 29 to 36 (GRSNVGKS), 56 to 60 (GKTQL), 81 to 84 (DLPG), 151 to 154 (TKCD), and 174 to 176 (VSN) each bind GTP. 2 residues coordinate Mg(2+): Ser-36 and Thr-58.

The protein belongs to the TRAFAC class TrmE-Era-EngA-EngB-Septin-like GTPase superfamily. EngB GTPase family. Requires Mg(2+) as cofactor.

Necessary for normal cell division and for the maintenance of normal septation. The protein is Probable GTP-binding protein EngB of Campylobacter jejuni subsp. jejuni serotype O:6 (strain 81116 / NCTC 11828).